The primary structure comprises 81 residues: uncharacterized protein (81 aa).

The next 2 membrane-spanning stretches (helical) occupy residues 1-21 (MTLFSFFLVILSFYYILFSLL) and 27-47 (IFIYIKIIPTVSYFHFNHHFF).

It localises to the membrane. This is an uncharacterized protein from Saccharomyces cerevisiae (strain ATCC 204508 / S288c) (Baker's yeast).